The sequence spans 224 residues: Glutathione S-transferase D7 (224 aa).

Positions 2–83 (PNLDLYNFPM…YLVEKYGKPD (82 aa)) constitute a GST N-terminal domain. Glutathione is bound by residues 53–55 (HTI) and 67–69 (ESR). In terms of domain architecture, GST C-terminal spans 90–210 (DPQKRALINQ…LESLQQGKKF (121 aa)).

It belongs to the GST superfamily. Delta family. As to quaternary structure, homodimer.

The catalysed reaction is RX + glutathione = an S-substituted glutathione + a halide anion + H(+). Functionally, conjugation of reduced glutathione to a wide number of exogenous and endogenous hydrophobic electrophiles. May be involved in detoxification. The protein is Glutathione S-transferase D7 of Drosophila melanogaster (Fruit fly).